The following is a 75-amino-acid chain: Scuwaprin-a (75 aa).

The first 24 residues, 1–24 (MSSGGLLLLLGLLTLWAELTPVSG), serve as a signal peptide directing secretion. The WAP domain maps to 27–72 (RPKKPGLCPPRPQKPPCVKECKNDWSCPGQQKCCSYGCIDECRDPI). Disulfide bonds link cysteine 34–cysteine 60, cysteine 43–cysteine 64, cysteine 47–cysteine 59, and cysteine 53–cysteine 68.

The protein belongs to the venom waprin family. In terms of tissue distribution, expressed by the venom gland.

It localises to the secreted. Its function is as follows. Damages membranes of susceptible bacteria. Has no hemolytic activity. Not toxic to mice. Does not inhibit the proteinases elastase and cathepsin G. In Oxyuranus scutellatus scutellatus (Australian taipan), this protein is Scuwaprin-a.